A 368-amino-acid polypeptide reads, in one-letter code: 3-dehydroquinate synthase (368 aa).

NAD(+) is bound by residues 110-114 (GVIGD), 134-135 (TS), Lys-147, and Lys-156. Positions 189, 254, and 271 each coordinate Zn(2+).

This sequence belongs to the sugar phosphate cyclases superfamily. Dehydroquinate synthase family. Requires NAD(+) as cofactor. The cofactor is Co(2+). Zn(2+) serves as cofactor.

It is found in the cytoplasm. The enzyme catalyses 7-phospho-2-dehydro-3-deoxy-D-arabino-heptonate = 3-dehydroquinate + phosphate. Its pathway is metabolic intermediate biosynthesis; chorismate biosynthesis; chorismate from D-erythrose 4-phosphate and phosphoenolpyruvate: step 2/7. In terms of biological role, catalyzes the conversion of 3-deoxy-D-arabino-heptulosonate 7-phosphate (DAHP) to dehydroquinate (DHQ). In Thermosynechococcus vestitus (strain NIES-2133 / IAM M-273 / BP-1), this protein is 3-dehydroquinate synthase.